The sequence spans 172 residues: MIGSKLKEAIRSYSDFPKKGILFHDISPIFCKPDLYQELIEEMAKSEILNSSDAIISIDARGFLFGSCISLKLSKPLILARKAGKLPGPILSSTYNLEYGENSLSIQKESLNEFKNFAIIDDVLATGGTINCVKSLLTSHNKNISGACVVIELLALKAREKLDFPIYSTLTL.

It belongs to the purine/pyrimidine phosphoribosyltransferase family. In terms of assembly, homodimer.

It is found in the cytoplasm. The catalysed reaction is AMP + diphosphate = 5-phospho-alpha-D-ribose 1-diphosphate + adenine. Its pathway is purine metabolism; AMP biosynthesis via salvage pathway; AMP from adenine: step 1/1. Its function is as follows. Catalyzes a salvage reaction resulting in the formation of AMP, that is energically less costly than de novo synthesis. In Prochlorococcus marinus (strain SARG / CCMP1375 / SS120), this protein is Adenine phosphoribosyltransferase.